Consider the following 218-residue polypeptide: Peptide methionine sulfoxide reductase MsrA (218 aa).

Cys-57 is a catalytic residue.

Belongs to the MsrA Met sulfoxide reductase family.

The enzyme catalyses L-methionyl-[protein] + [thioredoxin]-disulfide + H2O = L-methionyl-(S)-S-oxide-[protein] + [thioredoxin]-dithiol. It catalyses the reaction [thioredoxin]-disulfide + L-methionine + H2O = L-methionine (S)-S-oxide + [thioredoxin]-dithiol. In terms of biological role, has an important function as a repair enzyme for proteins that have been inactivated by oxidation. Catalyzes the reversible oxidation-reduction of methionine sulfoxide in proteins to methionine. The chain is Peptide methionine sulfoxide reductase MsrA from Brucella anthropi (Ochrobactrum anthropi).